A 160-amino-acid chain; its full sequence is Cytochrome b6-f complex subunit 4 (160 aa).

3 helical membrane passes run 36–56, 95–115, and 131–151; these read LLYI…GLAI, LLGV…PFLE, and TVFL…TLPI.

Belongs to the cytochrome b family. PetD subfamily. In terms of assembly, the 4 large subunits of the cytochrome b6-f complex are cytochrome b6, subunit IV (17 kDa polypeptide, petD), cytochrome f and the Rieske protein, while the 4 small subunits are petG, petL, petM and petN. The complex functions as a dimer.

Its subcellular location is the plastid. The protein resides in the chloroplast thylakoid membrane. In terms of biological role, component of the cytochrome b6-f complex, which mediates electron transfer between photosystem II (PSII) and photosystem I (PSI), cyclic electron flow around PSI, and state transitions. The protein is Cytochrome b6-f complex subunit 4 of Oenothera elata subsp. hookeri (Hooker's evening primrose).